A 433-amino-acid chain; its full sequence is Zinc finger protein CONSTANS-LIKE 15 (433 aa).

Zn(2+) contacts are provided by Cys-9, Cys-12, Cys-32, His-37, Cys-52, Cys-55, Cys-75, and His-80. A B box-type 1; atypical zinc finger spans residues 9 to 51; that stretch reads CDFCGERTAVLFCRADTAKLCLPCDQQVHTANLLSRKHVRSQI. The B box-type 2; atypical zinc-finger motif lies at 52-94; the sequence is CDNCGNEPVSVRCFTDNLILCQECDWDVHGSCSVSDAHVRSAV. The disordered stretch occupies residues 319–353; sequence DDYKRSTSGQVQPTKSESNNRPITFGSEKGSNSSS. Over residues 324-340 the composition is skewed to polar residues; it reads STSGQVQPTKSESNNRP. Residues 374–398 are a coiled coil; sequence TKADLERLAQNRGDAMQRYKEKRKT. The region spanning 385 to 427 is the CCT domain; the sequence is RGDAMQRYKEKRKTRRYDKTIRYESRKARADTRLRVRGRFVKA.

The protein belongs to the CONSTANS family.

The protein resides in the nucleus. This is Zinc finger protein CONSTANS-LIKE 15 (COL15) from Arabidopsis thaliana (Mouse-ear cress).